Reading from the N-terminus, the 284-residue chain is Probable protein phosphatase 2C 41 (284 aa).

The PPM-type phosphatase domain occupies 35–282 (SYGFYLVRGM…DDISCVVVRF (248 aa)). The Mn(2+) site is built by aspartate 72, glycine 73, aspartate 234, and aspartate 273.

The protein belongs to the PP2C family. Mg(2+) serves as cofactor. It depends on Mn(2+) as a cofactor.

The enzyme catalyses O-phospho-L-seryl-[protein] + H2O = L-seryl-[protein] + phosphate. It catalyses the reaction O-phospho-L-threonyl-[protein] + H2O = L-threonyl-[protein] + phosphate. The sequence is that of Probable protein phosphatase 2C 41 from Oryza sativa subsp. japonica (Rice).